The chain runs to 804 residues: SH3-containing GRB2-like protein 3-interacting protein 1 (804 aa).

Disordered regions lie at residues 1 to 90, 124 to 181, and 199 to 254; these read MMEG…EESH, LSPS…GPPL, and IWGS…QSAT. Positions 16 to 34 are enriched in basic and acidic residues; sequence RKKEKDTDSTGSPDRDGIK. A phosphoserine mark is found at serine 54, serine 80, serine 81, serine 83, serine 125, serine 127, serine 132, and serine 145. Phosphothreonine is present on residues threonine 156 and threonine 158. Residue serine 212 is modified to Phosphoserine. Pro residues predominate over residues 221–236; that stretch reads TGTPPPLPPKNVPATP. Phosphothreonine occurs at positions 223 and 235. 5 positions are modified to phosphoserine: serine 241, serine 263, serine 276, serine 292, and serine 295. The segment covering 289–309 has biased composition (basic and acidic residues); the sequence is VHFSDTSPEHVTPELTPREKV. Residues 289-500 form a disordered region; it reads VHFSDTSPEH…LSAATTPTVE (212 aa). Phosphothreonine occurs at positions 300 and 304. The segment covering 322 to 346 has biased composition (pro residues); it reads SPAPGPLGPPGPTGPPGPPGPPRNV. Serine 348 is modified (phosphoserine). Positions 354 to 369 are enriched in basic and acidic residues; that stretch reads EVQKKVAEQTFIKDDY. Residue serine 375 is modified to Phosphoserine. Threonine 386 is modified (phosphothreonine). The span at 413 to 432 shows a compositional bias: low complexity; that stretch reads TSGASSPARPATPLLPCSST. Positions 433-451 are enriched in pro residues; that stretch reads TPPPPPPRPPSRPKLPPGK. 2 stretches are compositionally biased toward low complexity: residues 458-468 and 475-498; these read SRPFSPPIHSS and PLAR…TTPT. Serine 462 carries the phosphoserine modification. The MHD domain maps to 535–803; that stretch reads TLPVAAAFTE…RFAAGKYLAD (269 aa). Interaction with DPF motifs-containing proteins regions lie at residues 537–543, 569–571, 643–646, and 789–794; these read PVAAAFT, SFP, TYYN, and SLIKKR. Residues 625–804 are necessary and sufficient to mediate interaction with CANX; it reads MPNLMTHLKK…FAAGKYLADN (180 aa).

In terms of assembly, interacts with proteins essential or regulating the formation of functional clathrin-coated pits. Interacts with CANX. Interacts with AP2A1. Interacts with EPS15. Interacts with SH3GL3. Interacts with AMPH. Interacts with ITSN1 (via SH3 domains). Interacts with and REPS1.

Its subcellular location is the membrane. The protein resides in the clathrin-coated pit. May function in clathrin-mediated endocytosis. Has both a membrane binding/tubulating activity and the ability to recruit proteins essential to the formation of functional clathrin-coated pits. Has a preference for membranes enriched in phosphatidylserine and phosphoinositides and is required for the endocytosis of the transferrin receptor. May also bind tubulin. May play a role in the regulation of energy homeostasis. This is SH3-containing GRB2-like protein 3-interacting protein 1 (SGIP1) from Pongo abelii (Sumatran orangutan).